Consider the following 504-residue polypeptide: Cytochrome P450 3A16 (504 aa).

C443 is a binding site for heme.

It belongs to the cytochrome P450 family. Heme is required as a cofactor.

Its subcellular location is the endoplasmic reticulum membrane. It localises to the microsome membrane. The enzyme catalyses an organic molecule + reduced [NADPH--hemoprotein reductase] + O2 = an alcohol + oxidized [NADPH--hemoprotein reductase] + H2O + H(+). Cytochromes P450 are a group of heme-thiolate monooxygenases. In liver microsomes, this enzyme is involved in an NADPH-dependent electron transport pathway. It oxidizes a variety of structurally unrelated compounds, including steroids, fatty acids, and xenobiotics. This Mus musculus (Mouse) protein is Cytochrome P450 3A16 (Cyp3a16).